The chain runs to 101 residues: MNSKLAVALLATFLLSLTLCEAAVLTRIGTELRCQCIKTHSTPFHPKFIKELRVIESGPHCANSEIIVKLVDGRELCLDPKEKWVQKVVQIFLKRAEQQES.

The signal sequence occupies residues Met-1 to Ala-22. Arg-27 carries the post-translational modification Citrulline. Disulfide bonds link Cys-34-Cys-61 and Cys-36-Cys-77.

The protein belongs to the intercrine alpha (chemokine CxC) family. As to quaternary structure, homodimer. Interacts with TNFAIP6 (via Link domain); this interaction interferes with chemokine binding to glycosaminoglycans. Citrullination at Arg-27 prevents proteolysis, and dampens tissue inflammation, it also enhances leukocytosis, possibly through impaired chemokine clearance from the blood circulation.

It is found in the secreted. Functionally, chemotactic factor that mediates inflammatory response by attracting neutrophils, basophils, and T-cells to clear pathogens and protect the host from infection. Also plays an important role in neutrophil activation. Released in response to an inflammatory stimulus, exerts its effect by binding to the G-protein-coupled receptors CXCR1 and CXCR2, primarily found in neutrophils, monocytes and endothelial cells. G-protein heterotrimer (alpha, beta, gamma subunits) constitutively binds to CXCR1/CXCR2 receptor and activation by IL8 leads to beta and gamma subunits release from Galpha (GNAI2 in neutrophils) and activation of several downstream signaling pathways including PI3K and MAPK pathways. The sequence is that of Interleukin-8 (CXCL8) from Oryctolagus cuniculus (Rabbit).